Here is a 65-residue protein sequence, read N- to C-terminus: Small, acid-soluble spore protein 2 (65 aa).

Belongs to the alpha/beta-type SASP family.

Functionally, SASP are bound to spore DNA. They are double-stranded DNA-binding proteins that cause DNA to change to an a-like conformation. They protect the DNA backbone from chemical and enzymatic cleavage and are thus involved in dormant spore's high resistance to UV light. This is Small, acid-soluble spore protein 2 (sasP-2) from Bacillus cereus.